Here is a 303-residue protein sequence, read N- to C-terminus: N-acetyl-D-glucosamine kinase (303 aa).

ATP is bound by residues 4–11 and 133–140; these read GFDIGGSK and GVGGGLIV. Zn(2+) contacts are provided by His-157, Cys-177, Cys-179, and Cys-184.

Belongs to the ROK (NagC/XylR) family. NagK subfamily.

The enzyme catalyses N-acetyl-D-glucosamine + ATP = N-acetyl-D-glucosamine 6-phosphate + ADP + H(+). It functions in the pathway cell wall biogenesis; peptidoglycan recycling. In terms of biological role, catalyzes the phosphorylation of N-acetyl-D-glucosamine (GlcNAc) derived from cell-wall degradation, yielding GlcNAc-6-P. The protein is N-acetyl-D-glucosamine kinase of Erwinia tasmaniensis (strain DSM 17950 / CFBP 7177 / CIP 109463 / NCPPB 4357 / Et1/99).